The chain runs to 638 residues: Lactose permease (638 aa).

The segment at M1–K470 is permease. The next 12 helical transmembrane spans lie at F27–L47, I56–I76, W94–F114, W121–L141, L166–V186, W204–F224, L261–Y281, F291–V311, W320–H340, V343–V363, F395–G415, and T429–F449. The PTS EIIA type-1 domain occupies S503–Q610. Phosphohistidine; by HPr is present on H558.

The protein in the N-terminal section; belongs to the sodium:galactoside symporter (TC 2.A.2) family.

It is found in the cell membrane. Responsible for transport of beta-galactosides into the cell, with the concomitant uptake of protons (symport system), and also for transport of homologous and heterologous exchange of beta-galactosides. In Lactobacillus helveticus (Lactobacillus suntoryeus), this protein is Lactose permease (lacS).